Consider the following 37-residue polypeptide: Cytochrome b6-f complex subunit 5 (37 aa).

Residues 5–25 (LLCGIVLGLIPVTLAGLFFAA) form a helical membrane-spanning segment.

It belongs to the PetG family. As to quaternary structure, the 4 large subunits of the cytochrome b6-f complex are cytochrome b6, subunit IV (17 kDa polypeptide, PetD), cytochrome f and the Rieske protein, while the 4 small subunits are PetG, PetL, PetM and PetN. The complex functions as a dimer.

The protein resides in the cellular thylakoid membrane. Component of the cytochrome b6-f complex, which mediates electron transfer between photosystem II (PSII) and photosystem I (PSI), cyclic electron flow around PSI, and state transitions. PetG is required for either the stability or assembly of the cytochrome b6-f complex. The sequence is that of Cytochrome b6-f complex subunit 5 from Thermosynechococcus vestitus (strain NIES-2133 / IAM M-273 / BP-1).